The chain runs to 433 residues: Serine/threonine-protein kinase KDX1 (433 aa).

The 296-residue stretch at F23 to L318 folds into the Protein kinase domain. ATP contacts are provided by residues I29–I37 and K55. The active-site Proton acceptor is D153.

Belongs to the protein kinase superfamily. Ser/Thr protein kinase family. Interacts with RLM1.

It carries out the reaction L-seryl-[protein] + ATP = O-phospho-L-seryl-[protein] + ADP + H(+). The enzyme catalyses L-threonyl-[protein] + ATP = O-phospho-L-threonyl-[protein] + ADP + H(+). Functionally, serine/threonine-protein kinase involved in the SLT2 mitogen-activated (MAP) kinase signaling pathway that regulates cell wall integrity. May also be involved in the mating pheromone and the CWI MAPK pathways. This is Serine/threonine-protein kinase KDX1 (KDX1) from Saccharomyces cerevisiae (strain ATCC 204508 / S288c) (Baker's yeast).